The sequence spans 180 residues: Shikimate kinase (180 aa).

14-19 lines the ATP pocket; it reads GAGKSS. Serine 18 is a Mg(2+) binding site. Aspartate 36, arginine 60, and glycine 82 together coordinate substrate. Residue arginine 120 coordinates ATP. Arginine 139 contacts substrate.

The protein belongs to the shikimate kinase family. As to quaternary structure, monomer. Requires Mg(2+) as cofactor.

It localises to the cytoplasm. The enzyme catalyses shikimate + ATP = 3-phosphoshikimate + ADP + H(+). It functions in the pathway metabolic intermediate biosynthesis; chorismate biosynthesis; chorismate from D-erythrose 4-phosphate and phosphoenolpyruvate: step 5/7. In terms of biological role, catalyzes the specific phosphorylation of the 3-hydroxyl group of shikimic acid using ATP as a cosubstrate. The protein is Shikimate kinase of Xylella fastidiosa (strain M12).